The sequence spans 658 residues: Endoplasmic reticulum chaperone BiP (658 aa).

Positions 1-19 (MVTMKLFALVLLVSASVFA) are cleaved as a signal peptide. ATP is bound by residues 38-41 (GTTY), K98, 228-230 (GGT), 294-301 (EKAKRALS), and 365-368 (GSTR). Positions 127–281 (KPYIEVDIGD…KKKTGKDVRA (155 aa)) are nucleotide-binding (NBD). Residues 410–420 (QDTGDLVLLDV) are interdomain linker. The segment at 421-501 (CPLTLGIETV…PRGVPQIEVT (81 aa)) is substrate-binding (SBD). The disordered stretch occupies residues 634-658 (KLYGGAGAPPPEGAEGAEETEKDEL). The segment covering 648–658 (EGAEETEKDEL) has biased composition (acidic residues). Positions 655-658 (KDEL) match the Prevents secretion from ER motif.

Belongs to the heat shock protein 70 family. In terms of assembly, monomer and homooligomer; homooligomerization via the interdomain linker inactivates the chaperone activity and acts as a storage of hspa5/BiP molecules. Interacts with DNAJC10. Interacts with dnajb9/ERdj4; leading to recruit hspa5/BiP to ern1/ire1. Interacts with ern1/ire1; interaction takes place following interaction with dnajb9/ERdj4 and leads to inactivate ern1/IRE1.

Its subcellular location is the endoplasmic reticulum lumen. The enzyme catalyses ATP + H2O = ADP + phosphate + H(+). With respect to regulation, the chaperone activity is regulated by ATP-induced allosteric coupling of the nucleotide-binding (NBD) and substrate-binding (SBD) domains. In the ADP-bound and nucleotide-free (apo) states, the two domains have little interaction. In contrast, in the ATP-bound state the two domains are tightly coupled, which results in drastically accelerated kinetics in both binding and release of polypeptide substrates. J domain-containing co-chaperones (dnajb9/ERdj4 or dnajc10/ERdj5) stimulate the ATPase activity and are required for efficient substrate recognition by hspa5/BiP. Homooligomerization inactivates participating hspa5/BiP protomers and probably act as reservoirs to store hspa5/BiP molecules when they are not needed by the cell. Its function is as follows. Endoplasmic reticulum chaperone that plays a key role in protein folding and quality control in the endoplasmic reticulum lumen. Involved in the correct folding of proteins and degradation of misfolded proteins via its interaction with dnajc10/ERdj5, probably to facilitate the release of dnajc10/ERdj5 from its substrate. Acts as a key repressor of the EIF2AK3/PERK and ERN1/IRE1-mediated unfolded protein response (UPR). In the unstressed endoplasmic reticulum, recruited by DNAJB9/ERdj4 to the luminal region of ERN1/IRE1, leading to disrupt the dimerization of ERN1/IRE1, thereby inactivating ERN1/IRE1. Also binds and inactivates EIF2AK3/PERK in unstressed cells. Accumulation of misfolded protein in the endoplasmic reticulum causes release of HSPA5/BiP from ERN1/IRE1 and EIF2AK3/PERK, allowing their homodimerization and subsequent activation. In Xenopus laevis (African clawed frog), this protein is Endoplasmic reticulum chaperone BiP.